A 309-amino-acid polypeptide reads, in one-letter code: Olfactory receptor 5H17 (309 aa).

Residues 1-28 lie on the Extracellular side of the membrane; the sequence is MEKKNETLWTEFVLTGLTCLPQWKPLLF. Asn5 carries an N-linked (GlcNAc...) asparagine glycan. Residues 29 to 49 form a helical membrane-spanning segment; that stretch reads LVFLVIYFMTIVGNLGLITLI. Residues 50-56 lie on the Cytoplasmic side of the membrane; sequence WNDPHLH. A helical membrane pass occupies residues 57-77; sequence IPMYLFLSNLAFVDTWLSSTV. Topologically, residues 78–93 are extracellular; sequence TPRMLFNLLDKGKVIS. Residues 94–114 form a helical membrane-spanning segment; that stretch reads VAECKTQFFSFAISVTTECFL. Cysteines 97 and 189 form a disulfide. Residues 115 to 144 are Cytoplasmic-facing; that stretch reads LAAMAYDRYAAICNPLLYPVIMTNRLCVRL. The chain crosses the membrane as a helical span at residues 145-165; the sequence is LALSFIGGFLHAVIHESFLSR. The Extracellular portion of the chain corresponds to 166 to 198; that stretch reads LTFCNSNIIYHFYCDVIPLLKISCTDPSLNYLI. Residues 199–219 form a helical membrane-spanning segment; sequence IFIFSGSIQVFTIMTVLISYT. The Cytoplasmic segment spans residues 220-239; it reads FVLFTILKKKSDKGIRKAFS. The helical transmembrane segment at 240-260 threads the bilayer; the sequence is TCGAHLLSVSLYYGPLLFMYV. At 261–271 the chain is on the extracellular side; the sequence is HPASSEVDDQD. The helical transmembrane segment at 272 to 292 threads the bilayer; the sequence is MILSLFYTVIIPVLNPIIYSL. At 293–309 the chain is on the cytoplasmic side; sequence RNKQVIDSLKKMLKMMV.

The protein belongs to the G-protein coupled receptor 1 family.

Its subcellular location is the cell membrane. Its function is as follows. Potential odorant receptor. The polypeptide is Olfactory receptor 5H17 (Mus musculus (Mouse)).